Reading from the N-terminus, the 219-residue chain is NAD(P)H-quinone oxidoreductase subunit K 2 (219 aa).

Residues C53, C54, C118, and C149 each coordinate [4Fe-4S] cluster.

This sequence belongs to the complex I 20 kDa subunit family. As to quaternary structure, NDH-1 can be composed of about 15 different subunits; different subcomplexes with different compositions have been identified which probably have different functions. [4Fe-4S] cluster is required as a cofactor.

It localises to the cellular thylakoid membrane. The catalysed reaction is a plastoquinone + NADH + (n+1) H(+)(in) = a plastoquinol + NAD(+) + n H(+)(out). It catalyses the reaction a plastoquinone + NADPH + (n+1) H(+)(in) = a plastoquinol + NADP(+) + n H(+)(out). NDH-1 shuttles electrons from an unknown electron donor, via FMN and iron-sulfur (Fe-S) centers, to quinones in the respiratory and/or the photosynthetic chain. The immediate electron acceptor for the enzyme in this species is believed to be plastoquinone. Couples the redox reaction to proton translocation, and thus conserves the redox energy in a proton gradient. Cyanobacterial NDH-1 also plays a role in inorganic carbon-concentration. The chain is NAD(P)H-quinone oxidoreductase subunit K 2 from Synechocystis sp. (strain ATCC 27184 / PCC 6803 / Kazusa).